The sequence spans 749 residues: MVLPTVLILLLSWAAGLGGQYGNPLNKYIRHYEGLSYNVDSLHQKHQRAKRAVSHEDQFLLLDFHAHGRQFNLRMKRDTSLFSDEFKVETSNKVLDYDTSHIYTGHIYGEEGSFSHGSVVDGRFEGFIQTRGGTFYIEPAERYIKDRILPFHSVIYHEDDINYPHKYGPQGGCADHSVFERMRKYQMTGVEEGTRAHSEEHAASMGPELLRKKRTTLAERNTCQLYIQTDHLFFKYYGTREAVIAQISSHVKAIDTIYQTTDFSGIRNISFMVKRIRINTTSDEKDPTNPFRFPNIGVEKFLELNSEQNHDDYCLAYVFTDRDFDDGVLGLAWVGAPSGSSGGICEKSKLYSDGKKKSLNTGIITVQNYGSHVPPKVSHITFAHEVGHNFGSPHDSGTECTPGESKNLGQKENGNYIMYARATSGDKLNNNKFSLCSIRNISQVLEKKRNNCFVESGQPICGNGMVEQGEECDCGYSDQCKDECCFDANQPEGKKCKLKPGKQCSPSQGPCCTAQCAFKSKSEKCRDDSDCAKEGICNGFTALCPASDPKPNFTDCNRHTQVCINGQCAGSICEKYDLEECTCASSDGKDDKELCHVCCMKKMAPSTCASTGSLQWNKQFNGRTITLQPGSPCNDFRGYCDVFMRCRLVDADGPLARLKKAIFSPQLYENIAEWIVAHWWAVLLMGIALIMLMAGFIKICSVHTPSSNPKLPPPKPLPGTLKRRRPPQPIQQPPRQRPRESYQMGHMRR.

The N-terminal stretch at 1-18 (MVLPTVLILLLSWAAGLG) is a signal peptide. The propeptide occupies 19–214 (GQYGNPLNKY…MGPELLRKKR (196 aa)). The short motif at 171–178 (GGCADHSV) is the Cysteine switch element. Cys-173 is a Zn(2+) binding site. The Extracellular segment spans residues 215 to 673 (TTLAERNTCQ…SPQLYENIAE (459 aa)). Residues 221 to 457 (NTCQLYIQTD…KRNNCFVESG (237 aa)) form the Peptidase M12B domain. Intrachain disulfides connect Cys-223–Cys-314, Cys-345–Cys-452, Cys-400–Cys-436, Cys-461–Cys-496, Cys-472–Cys-485, Cys-474–Cys-480, Cys-484–Cys-516, Cys-504–Cys-512, Cys-511–Cys-537, Cys-525–Cys-544, Cys-531–Cys-563, Cys-556–Cys-568, Cys-573–Cys-599, Cys-581–Cys-608, Cys-583–Cys-598, Cys-595–Cys-640, and Cys-633–Cys-646. N-linked (GlcNAc...) asparagine glycans are attached at residues Asn-268 and Asn-279. Residue His-384 participates in Zn(2+) binding. Glu-385 is an active-site residue. Zn(2+) is bound by residues His-388 and His-394. Asn-440 is a glycosylation site (N-linked (GlcNAc...) asparagine). Positions 458–552 (QPICGNGMVE…LCPASDPKPN (95 aa)) constitute a Disintegrin domain. A glycan (N-linked (GlcNAc...) asparagine) is linked at Asn-552. A helical transmembrane segment spans residues 674-697 (WIVAHWWAVLLMGIALIMLMAGFI). Residues 698–749 (KICSVHTPSSNPKLPPPKPLPGTLKRRRPPQPIQQPPRQRPRESYQMGHMRR) are Cytoplasmic-facing. The segment at 705–749 (PSSNPKLPPPKPLPGTLKRRRPPQPIQQPPRQRPRESYQMGHMRR) is disordered. An SH3-binding motif is present at residues 709 to 716 (PKLPPPKP). Thr-720 carries the post-translational modification Phosphothreonine. Positions 723 to 729 (RRRPPQP) match the SH3-binding motif. An interaction with AP2A1, AP2A2 and AP2M1 region spans residues 735–749 (RQRPRESYQMGHMRR).

As to quaternary structure, forms a ternary EFNA5-EPHA3-ADAM10 complex mediating EFNA5 extracellular domain shedding by ADAM10 which regulates the EFNA5-EPHA3 complex internalization and function, the cleavage occurs in trans, with ADAM10 and its substrate being on the membranes of opposing cells. Interacts with the clathrin adapter AP2 complex subunits AP2A1, AP2A2, AP2B1, and AP2M1; this interaction facilitates ADAM10 endocytosis from the plasma membrane during long-term potentiation in hippocampal neurons. Forms a ternary complex composed of ADAM10, EPHA4 and CADH1; within the complex, ADAM10 cleaves CADH1 which disrupts adherens junctions. Interacts with EPHA2. Interacts with NGF in a divalent cation-dependent manner. Interacts with TSPAN14; the interaction promotes ADAM10 maturation and cell surface expression. Interacts with TSPAN5, TSPAN10, TSPAN14, TSPAN15, TSPAN17 and TSPAN33; these interactions regulate ADAM10 substrate specificity, endocytosis and turnover. Interacts (via extracellular domain) with TSPAN33 (via extracellular domain) and (via cytoplasmic domain) with AFDN; interaction with TSPAN33 allows the docking of ADAM10 to zonula adherens through a PDZ11-dependent interaction between TSPAN33 and PLEKHA7 while interaction with AFDN locks ADAM10 at zonula adherens. Interacts with DLG1; this interaction recruits ADAM10 to the cell membrane during long-term depression in hippocampal neurons. Interacts (via extracellular domain) with BACE1 (via extracellular domain). Interacts with FAM171A1. The cofactor is Zn(2+). Post-translationally, the precursor is cleaved by furin and PCSK7. Expressed in brain, kidney, lung, spleen, ovary and testis.

It localises to the cell membrane. The protein localises to the golgi apparatus membrane. It is found in the cytoplasmic vesicle. The protein resides in the clathrin-coated vesicle. Its subcellular location is the cell projection. It localises to the axon. The protein localises to the dendrite. It is found in the cell junction. The protein resides in the adherens junction. Its subcellular location is the cytoplasm. It catalyses the reaction Endopeptidase of broad specificity.. With respect to regulation, catalytically inactive when the propeptide is intact and associated with the mature enzyme. The disintegrin and cysteine-rich regions modulate access of substrates to exerts an inhibitory effect on the cleavage of ADAM10 substrates. In terms of biological role, transmembrane metalloprotease which mediates the ectodomain shedding of a myriad of transmembrane proteins, including adhesion proteins, growth factor precursors and cytokines being essential for development and tissue homeostasis. Associates with six members of the tetraspanin superfamily TspanC8 which regulate its exit from the endoplasmic reticulum and its substrate selectivity. Cleaves the membrane-bound precursor of TNF-alpha at '76-Ala-|-Val-77' to its mature soluble form. Responsible for the proteolytical release of soluble JAM3 from endothelial cells surface. Responsible for the proteolytic release of several other cell-surface proteins, including heparin-binding epidermal growth-like factor, ephrin-A2, CD44, CDH2 and for constitutive and regulated alpha-secretase cleavage of amyloid precursor protein (APP). Contributes to the normal cleavage of the cellular prion protein. Involved in the cleavage of the adhesion molecule L1 at the cell surface and in released membrane vesicles, suggesting a vesicle-based protease activity. Also controls the proteolytic processing of Notch and mediates lateral inhibition during neurogenesis. Required for the development of type 1 transitional B cells into marginal zone B cells, probably by cleaving Notch. Responsible for the FasL ectodomain shedding and for the generation of the remnant ADAM10-processed FasL (FasL APL) transmembrane form. Also cleaves the ectodomain of the integral membrane proteins CORIN and ITM2B. Mediates the proteolytic cleavage of LAG3, leading to release the secreted form of LAG3. Mediates the proteolytic cleavage of IL6R and IL11RA, leading to the release of secreted forms of IL6R and IL11RA. Enhances the cleavage of CHL1 by BACE1. Cleaves NRCAM. Cleaves TREM2, resulting in shedding of the TREM2 ectodomain. Involved in the development and maturation of glomerular and coronary vasculature. During development of the cochlear organ of Corti, promotes pillar cell separation by forming a ternary complex with CADH1 and EPHA4 and cleaving CADH1 at adherens junctions. May regulate the EFNA5-EPHA3 signaling. Regulates leukocyte transmigration as a sheddase for the adherens junction protein VE-cadherin/CDH5 in endothelial cells. The polypeptide is Disintegrin and metalloproteinase domain-containing protein 10 (Adam10) (Rattus norvegicus (Rat)).